The sequence spans 337 residues: Glucose transporter 2C (337 aa).

The interval 1 to 22 (MTERRDNVSHAPDAIEGPNDGA) is disordered. The Cytoplasmic portion of the chain corresponds to 1-43 (MTERRDNVSHAPDAIEGPNDGAHAEDTSPGFFSLENLGVAQVQ). The chain crosses the membrane as a helical span at residues 44-64 (VVGGTLNGFSIGFVAVYILLY). The Extracellular segment spans residues 65–119 (EVATNCSLFKTTEACKAVGSYGCEWKDTEVCSWKKECDSDSDGVNPCESLIGYSS). Asn-69 carries an N-linked (GlcNAc...) asparagine glycan. The helical transmembrane segment at 120-140 (LYSGIFASAMIVGSMVGSIIA) threads the bilayer. Topologically, residues 141–152 (GKCITMFGLKKS) are cytoplasmic. The chain crosses the membrane as a helical span at residues 153–173 (FIIVGVMSVVASALNHISVAT). Residues 174–175 (NE) lie on the Extracellular side of the membrane. Residues 176–196 (FWVLCAGRVLMGIGLGVVCVI) form a helical membrane-spanning segment. Topologically, residues 197-214 (CPMYVNENAHPKLSKVDG) are cytoplasmic. A helical membrane pass occupies residues 215-235 (VLFQVFITFGIMLAAMLGLIL). Over 236 to 250 (DKTVNYDNDPDMAGR) the chain is Extracellular. Residues 251 to 271 (FHGFCAVSSVLSVAMFLVGMF) traverse the membrane as a helical segment. Residues 272-300 (LRESTATFSQDDDGKADGGMDPNEYGWGQ) are Cytoplasmic-facing. A helical transmembrane segment spans residues 301–321 (MLWPLFMGAVTAGTLQLTGIN). The Extracellular portion of the chain corresponds to 322–337 (AVMNYAPKITENLGMD).

It belongs to the major facilitator superfamily. Sugar transporter (TC 2.A.1.1) family.

Its subcellular location is the membrane. Functionally, facilitative glucose transporter. The protein is Glucose transporter 2C (THT2C) of Trypanosoma brucei brucei.